A 196-amino-acid polypeptide reads, in one-letter code: Glycerol-3-phosphate acyltransferase (196 aa).

A run of 6 helical transmembrane segments spans residues Val5–Cys25, Phe53–Ala73, Pro80–Phe100, Gly107–Leu127, Trp130–Ile150, and Phe153–Leu173.

It belongs to the PlsY family. In terms of assembly, probably interacts with PlsX.

The protein localises to the cell inner membrane. It catalyses the reaction an acyl phosphate + sn-glycerol 3-phosphate = a 1-acyl-sn-glycero-3-phosphate + phosphate. Its pathway is lipid metabolism; phospholipid metabolism. Functionally, catalyzes the transfer of an acyl group from acyl-phosphate (acyl-PO(4)) to glycerol-3-phosphate (G3P) to form lysophosphatidic acid (LPA). This enzyme utilizes acyl-phosphate as fatty acyl donor, but not acyl-CoA or acyl-ACP. The polypeptide is Glycerol-3-phosphate acyltransferase (Actinobacillus pleuropneumoniae serotype 7 (strain AP76)).